Consider the following 279-residue polypeptide: Tryptophan synthase alpha chain (279 aa).

Catalysis depends on proton acceptor residues Glu50 and Asp61.

It belongs to the TrpA family. Tetramer of two alpha and two beta chains.

It carries out the reaction (1S,2R)-1-C-(indol-3-yl)glycerol 3-phosphate + L-serine = D-glyceraldehyde 3-phosphate + L-tryptophan + H2O. The protein operates within amino-acid biosynthesis; L-tryptophan biosynthesis; L-tryptophan from chorismate: step 5/5. In terms of biological role, the alpha subunit is responsible for the aldol cleavage of indoleglycerol phosphate to indole and glyceraldehyde 3-phosphate. This is Tryptophan synthase alpha chain from Rhizobium meliloti (strain 1021) (Ensifer meliloti).